Reading from the N-terminus, the 300-residue chain is Ribonuclease HIII (300 aa).

Positions 83–300 constitute an RNase H type-2 domain; sequence IPIIGSDEVG…THKAQALLTK (218 aa). A divalent metal cation-binding residues include aspartate 89, glutamate 90, and aspartate 194.

Belongs to the RNase HII family. RnhC subfamily. The cofactor is Mn(2+). It depends on Mg(2+) as a cofactor.

The protein localises to the cytoplasm. The enzyme catalyses Endonucleolytic cleavage to 5'-phosphomonoester.. In terms of biological role, endonuclease that specifically degrades the RNA of RNA-DNA hybrids. The polypeptide is Ribonuclease HIII (Streptococcus pyogenes serotype M28 (strain MGAS6180)).